The sequence spans 154 residues: Photosystem II extrinsic protein U, chloroplastic (154 aa).

Residues 1-36 (MAFISTPLGKVTVKSATVSANRRGLRMQSDSEPVVS) constitute a chloroplast transit peptide. A thylakoid-targeting transit peptide spans 37–61 (RRALLSGALAAAVAAALARARPAQA).

Belongs to the PsbU family. PSII is composed of 1 copy each of membrane proteins PsbA, PsbB, PsbC, PsbD, PsbE, PsbF, PsbH, PsbI, PsbJ, PsbK, PsbL, PsbM, PsbT, PsbY, PsbZ, Psb30/Ycf12, at least 3 peripheral proteins of the oxygen-evolving complex and a large number of cofactors. It forms dimeric complexes. The extrinsic subunits in red algae are PsbO (OEC33), PsbQ', cytochrome c-550 and PsbU. Predicted to be translocated into the thylakoid lumen by the Tat system. The position of the first transit peptide cleavage has not been experimentally proven.

Its subcellular location is the plastid. It localises to the chloroplast thylakoid membrane. Its function is as follows. One of the extrinsic, lumenal subunits of photosystem II (PSII). PSII is a light-driven water plastoquinone oxidoreductase, using light energy to abstract electrons from H(2)O, generating a proton gradient subsequently used for ATP formation. The extrinsic proteins stabilize the structure of photosystem II oxygen-evolving complex (OEC), the ion environment of oxygen evolution and protect the OEC against heat-induced inactivation. This chain is Photosystem II extrinsic protein U, chloroplastic, found in Cyanidium caldarium (Red alga).